Reading from the N-terminus, the 130-residue chain is MWKEFKEFAFKGNIIDLAVAVVIGGAFGAIVTSFVENIITPLMGVIVGGVDFTTLKVTVGEAEILYGNFIQSFVDFIIIAFSIFLAIKFLVKFKRQKEEEEVEAVVEELSKQEELLTEIRDLLKEQSNKN.

The next 2 helical transmembrane spans lie at 14–34 (IIDL…VTSF) and 73–93 (FVDF…LVKF).

Belongs to the MscL family. As to quaternary structure, homopentamer.

Its subcellular location is the cell membrane. Its function is as follows. Channel that opens in response to stretch forces in the membrane lipid bilayer. May participate in the regulation of osmotic pressure changes within the cell. This Oceanobacillus iheyensis (strain DSM 14371 / CIP 107618 / JCM 11309 / KCTC 3954 / HTE831) protein is Large-conductance mechanosensitive channel.